The following is a 361-amino-acid chain: uncharacterized protein (361 aa).

Threonine 12 is modified (phosphothreonine).

The protein resides in the cytoplasm. Its subcellular location is the nucleus. This is an uncharacterized protein from Schizosaccharomyces pombe (strain 972 / ATCC 24843) (Fission yeast).